Consider the following 218-residue polypeptide: Ras-related protein Rab-27B (218 aa).

The residue at position 2 (threonine 2) is an N-acetylthreonine. A GTP-binding site is contributed by 16–24 (GDSGVGKTT). The short motif at 38–46 (FITTVGIDF) is the Effector region element. Residues 74-78 (DTAGQ), 133-136 (NKAD), and 163-165 (SAA) contribute to the GTP site. Cysteine 123 and cysteine 188 are joined by a disulfide. Residues 193 to 218 (HIPDTVNGSSSGKLDGEKSAEKKCAC) are disordered. A compositionally biased stretch (basic and acidic residues) spans 206 to 218 (LDGEKSAEKKCAC). Residues cysteine 216 and cysteine 218 are each lipidated (S-geranylgeranyl cysteine). Cysteine 218 is modified (cysteine methyl ester).

The protein belongs to the small GTPase superfamily. Rab family. Interacts with SYTL2, SYTL4, MYRIP and MLPH. Interacts with RPH3A and RPH3A. Interacts (GDP-bound form preferentially) with DENND10. As to expression, expressed at an extraordinary high level (0.1% of total protein) in urothelium.

It localises to the membrane. Its subcellular location is the late endosome. It carries out the reaction GTP + H2O = GDP + phosphate + H(+). Its activity is regulated as follows. Regulated by guanine nucleotide exchange factors (GEFs) which promote the exchange of bound GDP for free GTP, GTPase activating proteins (GAPs) which increase the GTP hydrolysis activity, and GDP dissociation inhibitors which inhibit the dissociation of the nucleotide from the GTPase. Activated by GEFs such as DENND10. Functionally, small GTPase which cycles between active GTP-bound and inactive GDP-bound states. In its active state, binds to a variety of effector proteins to regulate homeostasis of late endocytic pathway, including endosomal positioning, maturation and secretion. Plays a role in NTRK2/TRKB axonal anterograde transport by facilitating the association of NTRK2/TRKB with KLC1. May be involved in targeting uroplakins to urothelial apical membranes. The polypeptide is Ras-related protein Rab-27B (RAB27B) (Bos taurus (Bovine)).